We begin with the raw amino-acid sequence, 177 residues long: Large ribosomal subunit protein bL19 (177 aa).

It belongs to the bacterial ribosomal protein bL19 family.

In terms of biological role, this protein is located at the 30S-50S ribosomal subunit interface and may play a role in the structure and function of the aminoacyl-tRNA binding site. The polypeptide is Large ribosomal subunit protein bL19 (Sinorhizobium medicae (strain WSM419) (Ensifer medicae)).